The chain runs to 97 residues: Co-chaperonin GroES (97 aa).

This sequence belongs to the GroES chaperonin family. Heptamer of 7 subunits arranged in a ring. Interacts with the chaperonin GroEL.

It is found in the cytoplasm. Together with the chaperonin GroEL, plays an essential role in assisting protein folding. The GroEL-GroES system forms a nano-cage that allows encapsulation of the non-native substrate proteins and provides a physical environment optimized to promote and accelerate protein folding. GroES binds to the apical surface of the GroEL ring, thereby capping the opening of the GroEL channel. This is Co-chaperonin GroES from Elusimicrobium minutum (strain Pei191).